The chain runs to 251 residues: MLTKRIIPCLDVTAGRVVKGVNFVSLTDVGDPVEIAKAYNEAGADELVFLDITATVELRQTMIDVVERTAEQVFIPLTVGGGISSVSDMKELLQAGADKISLNSAAIKRPELIQEGAAKFGNQCIVVAIDAKWNGTNWSVFTRGGRNDTGLDAIEWAKKAVQLGAGEILLTSMDGDGTKNGYDIPLTKAISAAVSVPVIASGGCGNAAHMAEVFEKTKATAALAASIFHYGELSIKNVKTTLLEKGVNIRP.

Residues Asp-11 and Asp-130 contribute to the active site.

It belongs to the HisA/HisF family. As to quaternary structure, heterodimer of HisH and HisF.

It is found in the cytoplasm. The catalysed reaction is 5-[(5-phospho-1-deoxy-D-ribulos-1-ylimino)methylamino]-1-(5-phospho-beta-D-ribosyl)imidazole-4-carboxamide + L-glutamine = D-erythro-1-(imidazol-4-yl)glycerol 3-phosphate + 5-amino-1-(5-phospho-beta-D-ribosyl)imidazole-4-carboxamide + L-glutamate + H(+). The protein operates within amino-acid biosynthesis; L-histidine biosynthesis; L-histidine from 5-phospho-alpha-D-ribose 1-diphosphate: step 5/9. In terms of biological role, IGPS catalyzes the conversion of PRFAR and glutamine to IGP, AICAR and glutamate. The HisF subunit catalyzes the cyclization activity that produces IGP and AICAR from PRFAR using the ammonia provided by the HisH subunit. The protein is Imidazole glycerol phosphate synthase subunit HisF of Listeria monocytogenes serotype 4b (strain CLIP80459).